The chain runs to 111 residues: Putative protein YddJ (111 aa).

This is Putative protein YddJ (yddJ) from Escherichia coli (strain K12).